The sequence spans 334 residues: MTPLETKRPLQLNDQGQLQHFLSLDGLRRELLTEILDTADSFLEVGARAVKKVPLLRGKTVCNVFFENSTRTRTTFELAAQRLSADVITLNVSTSSASKGETLLDTLRNLEAMAADMFVVRHGDSGAAHFIAEHVCPQVAIINGGDGRHAHPTQGMLDMLTIRRHKGSFENLSVAIVGDILHSRVARSNMLALKTLGCPDIRVIAPKTLLPIGVEQYGVKVYTDMTEGLKDVDVVIMLRLQRERMTGGLLPSEGEFYRLFGLTTARLAGAKPDAIVMHPGPINRGVEIESAVADGPHSVILNQVTYGIAIRMAVLSMAMSGQTAQRQFDQENAQ.

R71 and T72 together coordinate carbamoyl phosphate. Residue K99 participates in L-aspartate binding. The carbamoyl phosphate site is built by R121, H151, and Q154. L-aspartate contacts are provided by R184 and R239. Carbamoyl phosphate contacts are provided by G280 and P281.

The protein belongs to the aspartate/ornithine carbamoyltransferase superfamily. ATCase family. As to quaternary structure, heterododecamer (2C3:3R2) of six catalytic PyrB chains organized as two trimers (C3), and six regulatory PyrI chains organized as three dimers (R2).

The catalysed reaction is carbamoyl phosphate + L-aspartate = N-carbamoyl-L-aspartate + phosphate + H(+). The protein operates within pyrimidine metabolism; UMP biosynthesis via de novo pathway; (S)-dihydroorotate from bicarbonate: step 2/3. Functionally, catalyzes the condensation of carbamoyl phosphate and aspartate to form carbamoyl aspartate and inorganic phosphate, the committed step in the de novo pyrimidine nucleotide biosynthesis pathway. This Pseudomonas fluorescens biotype A protein is Aspartate carbamoyltransferase catalytic subunit.